A 117-amino-acid chain; its full sequence is Large ribosomal subunit protein bL20 (117 aa).

This sequence belongs to the bacterial ribosomal protein bL20 family.

Functionally, binds directly to 23S ribosomal RNA and is necessary for the in vitro assembly process of the 50S ribosomal subunit. It is not involved in the protein synthesizing functions of that subunit. The protein is Large ribosomal subunit protein bL20 of Roseiflexus sp. (strain RS-1).